Consider the following 532-residue polypeptide: Glutamate--cysteine ligase (532 aa).

Belongs to the glutamate--cysteine ligase type 1 family. Type 1 subfamily.

The enzyme catalyses L-cysteine + L-glutamate + ATP = gamma-L-glutamyl-L-cysteine + ADP + phosphate + H(+). The protein operates within sulfur metabolism; glutathione biosynthesis; glutathione from L-cysteine and L-glutamate: step 1/2. This chain is Glutamate--cysteine ligase, found in Pseudomonas fluorescens (strain Pf0-1).